The chain runs to 279 residues: Small ribosomal subunit protein uS2 (279 aa).

Positions 255 to 279 (LLAGATTAAPEAAAGEAAAAPEQSS) are disordered.

This sequence belongs to the universal ribosomal protein uS2 family.

In Mycolicibacterium gilvum (strain PYR-GCK) (Mycobacterium gilvum (strain PYR-GCK)), this protein is Small ribosomal subunit protein uS2.